Here is a 348-residue protein sequence, read N- to C-terminus: Large ribosomal subunit protein uL3m (348 aa).

Residues 1 to 40 (MPGWRLLAWAGARVLDRGTGGLGTALGSGNRTDICVLVRS) constitute a mitochondrion transit peptide.

This sequence belongs to the universal ribosomal protein uL3 family. Component of the mitochondrial ribosome large subunit (39S) which comprises a 16S rRNA and about 50 distinct proteins.

It localises to the mitochondrion. The sequence is that of Large ribosomal subunit protein uL3m (MRPL3) from Bos taurus (Bovine).